The following is a 66-amino-acid chain: Large ribosomal subunit protein eL24 (66 aa).

4 residues coordinate Zn(2+): C6, C9, C32, and C36. A C4-type zinc finger spans residues 6–36 (CSFCGKTIEPGTGIMYVRKDGAILYFCSNKC).

This sequence belongs to the eukaryotic ribosomal protein eL24 family. Part of the 50S ribosomal subunit. Forms a cluster with proteins L3 and L14. Requires Zn(2+) as cofactor.

Functionally, binds to the 23S rRNA. This chain is Large ribosomal subunit protein eL24, found in Thermoplasma volcanium (strain ATCC 51530 / DSM 4299 / JCM 9571 / NBRC 15438 / GSS1).